We begin with the raw amino-acid sequence, 616 residues long: Chaperone protein HscA (616 aa).

This sequence belongs to the heat shock protein 70 family.

Functionally, chaperone involved in the maturation of iron-sulfur cluster-containing proteins. Has a low intrinsic ATPase activity which is markedly stimulated by HscB. Involved in the maturation of IscU. This Escherichia coli O139:H28 (strain E24377A / ETEC) protein is Chaperone protein HscA.